The sequence spans 613 residues: Dihydroxy-acid dehydratase (613 aa).

Asp81 provides a ligand contact to Mg(2+). Cys122 provides a ligand contact to [2Fe-2S] cluster. Mg(2+) is bound by residues Asp123 and Lys124. At Lys124 the chain carries N6-carboxylysine. Position 193 (Cys193) interacts with [2Fe-2S] cluster. Residue Glu489 participates in Mg(2+) binding. Ser515 acts as the Proton acceptor in catalysis.

The protein belongs to the IlvD/Edd family. Homodimer. [2Fe-2S] cluster is required as a cofactor. It depends on Mg(2+) as a cofactor.

The enzyme catalyses (2R)-2,3-dihydroxy-3-methylbutanoate = 3-methyl-2-oxobutanoate + H2O. The catalysed reaction is (2R,3R)-2,3-dihydroxy-3-methylpentanoate = (S)-3-methyl-2-oxopentanoate + H2O. It participates in amino-acid biosynthesis; L-isoleucine biosynthesis; L-isoleucine from 2-oxobutanoate: step 3/4. Its pathway is amino-acid biosynthesis; L-valine biosynthesis; L-valine from pyruvate: step 3/4. Functionally, functions in the biosynthesis of branched-chain amino acids. Catalyzes the dehydration of (2R,3R)-2,3-dihydroxy-3-methylpentanoate (2,3-dihydroxy-3-methylvalerate) into 2-oxo-3-methylpentanoate (2-oxo-3-methylvalerate) and of (2R)-2,3-dihydroxy-3-methylbutanoate (2,3-dihydroxyisovalerate) into 2-oxo-3-methylbutanoate (2-oxoisovalerate), the penultimate precursor to L-isoleucine and L-valine, respectively. In Pseudomonas fluorescens (strain Pf0-1), this protein is Dihydroxy-acid dehydratase.